Here is a 228-residue protein sequence, read N- to C-terminus: Sec-independent protein translocase protein TatB (228 aa).

The chain crosses the membrane as a helical span at residues 1–21 (MFDFGLGELVFVGIIALIVLG). Disordered stretches follow at residues 109–162 (DFGV…AETD) and 197–228 (PHTT…VRKS). Basic residues predominate over residues 206-228 (AISRKRDFRPKHRAKPKLRVRKS).

Belongs to the TatB family. As to quaternary structure, the Tat system comprises two distinct complexes: a TatABC complex, containing multiple copies of TatA, TatB and TatC subunits, and a separate TatA complex, containing only TatA subunits. Substrates initially bind to the TatABC complex, which probably triggers association of the separate TatA complex to form the active translocon.

It localises to the cell inner membrane. Functionally, part of the twin-arginine translocation (Tat) system that transports large folded proteins containing a characteristic twin-arginine motif in their signal peptide across membranes. Together with TatC, TatB is part of a receptor directly interacting with Tat signal peptides. TatB may form an oligomeric binding site that transiently accommodates folded Tat precursor proteins before their translocation. In Neisseria meningitidis serogroup B (strain ATCC BAA-335 / MC58), this protein is Sec-independent protein translocase protein TatB.